We begin with the raw amino-acid sequence, 328 residues long: DNA repair and recombination protein RadA (328 aa).

An ATP-binding site is contributed by 118 to 125 (GEYGSGKT).

It belongs to the eukaryotic RecA-like protein family.

In terms of biological role, involved in DNA repair and in homologous recombination. Binds and assemble on single-stranded DNA to form a nucleoprotein filament. Hydrolyzes ATP in a ssDNA-dependent manner and promotes DNA strand exchange between homologous DNA molecules. The polypeptide is DNA repair and recombination protein RadA (Desulfurococcus amylolyticus (strain DSM 18924 / JCM 16383 / VKM B-2413 / 1221n) (Desulfurococcus kamchatkensis)).